The primary structure comprises 144 residues: Small ribosomal subunit protein eS19A (144 aa).

The interval 83–102 is disordered; sequence VNRGMRPSHHRDGSGSVQRK.

The protein belongs to the eukaryotic ribosomal protein eS19 family. In terms of assembly, component of the small ribosomal subunit (SSU). Mature yeast ribosomes consist of a small (40S) and a large (60S) subunit. The 40S small subunit contains 1 molecule of ribosomal RNA (18S rRNA) and at least 33 different proteins. The large 60S subunit contains 3 rRNA molecules (25S, 5.8S and 5S rRNA) and at least 46 different proteins.

The protein resides in the cytoplasm. The protein localises to the nucleus. It localises to the nucleolus. Component of the ribosome, a large ribonucleoprotein complex responsible for the synthesis of proteins in the cell. The small ribosomal subunit (SSU) binds messenger RNAs (mRNAs) and translates the encoded message by selecting cognate aminoacyl-transfer RNA (tRNA) molecules. The large subunit (LSU) contains the ribosomal catalytic site termed the peptidyl transferase center (PTC), which catalyzes the formation of peptide bonds, thereby polymerizing the amino acids delivered by tRNAs into a polypeptide chain. The nascent polypeptides leave the ribosome through a tunnel in the LSU and interact with protein factors that function in enzymatic processing, targeting, and the membrane insertion of nascent chains at the exit of the ribosomal tunnel. eS19 is required for proper maturation of the small (40S) ribosomal subunit. Binds to 40S pre-ribosomal particles, probably required after association of NOC4 but before association of ENP1, TSR1 and RIO2 with 20/21S pre-rRNA. This Schizosaccharomyces pombe (strain 972 / ATCC 24843) (Fission yeast) protein is Small ribosomal subunit protein eS19A (rps1901).